Here is a 167-residue protein sequence, read N- to C-terminus: MHTPKHAIRRMSKGEMEFFEGRCQRMGEAERTVWGTKWCGSGNEATSGIDLGYFKNLDSCCRTHDHCDNIPAGETKYGLTNEGIYTMMNCKCESVFKQCLKDVTGVFEGPAAAAVRKIYFDLYGNGCYSVQCPAGGRSARTGGCPNGVATYTGETGYGAWLLNKANG.

The Ca(2+) site is built by Trp-38, Gly-40, and Gly-42. Disulfide bonds link Cys-39/Cys-61, Cys-60/Cys-99, Cys-67/Cys-92, Cys-90/Cys-127, and Cys-132/Cys-144. His-64 is an active-site residue. Residue Asp-65 coordinates Ca(2+). The propeptide occupies 136–140 (GRSAR).

This sequence belongs to the phospholipase A2 family. Group III subfamily. In terms of assembly, heterodimer composed of a large and a small subunits; disulfide-linked. It depends on Ca(2+) as a cofactor. As to expression, expressed by the venom gland.

The protein localises to the secreted. The catalysed reaction is a 1,2-diacyl-sn-glycero-3-phosphocholine + H2O = a 1-acyl-sn-glycero-3-phosphocholine + a fatty acid + H(+). In terms of biological role, phospholipase toxin, which catalyzes the calcium-dependent hydrolysis of the 2-acyl groups in 3-sn-phosphoglycerides. Inhibits both skeletal (RYR1) and cardiac (RYR2) ryanodine receptors (calcium release channels). Probably blocks ryanodine receptors by generating a lipid product. This is Phospholipase A2 heteromtoxin from Heterometrus laoticus (Thai giant scorpion).